Consider the following 553-residue polypeptide: Putative transport protein KPK_0013 (553 aa).

A run of 5 helical transmembrane segments spans residues 4–24, 28–48, 65–85, 95–115, and 158–178; these read IALT…IGNV, GVGF…HFVD, FGLI…FFAS, LFAI…HKLF, and MSYA…MWLV. 2 consecutive RCK C-terminal domains span residues 192–276 and 279–361; these read RFEE…VIGQ and ATSL…ELGN. Transmembrane regions (helical) follow at residues 371-391, 403-425, 437-457, 464-484, 493-513, and 532-552; these read MLPV…PLFI, AGGP…LYWF, LGIV…FVAT, LSWI…VGIL, YLTL…LAFA, and PLVM…FWGL.

It belongs to the AAE transporter (TC 2.A.81) family. YidE subfamily.

It localises to the cell membrane. The sequence is that of Putative transport protein KPK_0013 from Klebsiella pneumoniae (strain 342).